A 30-amino-acid polypeptide reads, in one-letter code: Dermaseptin-3.4TR (30 aa).

Expressed by the skin glands.

Its subcellular location is the secreted. Has antimicrobial activity. This chain is Dermaseptin-3.4TR, found in Phyllomedusa trinitatis (Trinidad leaf frog).